The sequence spans 431 residues: 3-phosphoshikimate 1-carboxyvinyltransferase (431 aa).

3 residues coordinate 3-phosphoshikimate: K21, S22, and R26. K21 is a binding site for phosphoenolpyruvate. 2 residues coordinate phosphoenolpyruvate: G93 and R121. S166, Q168, S192, D317, and K344 together coordinate 3-phosphoshikimate. Q168 serves as a coordination point for phosphoenolpyruvate. D317 functions as the Proton acceptor in the catalytic mechanism. Positions 348 and 390 each coordinate phosphoenolpyruvate.

Belongs to the EPSP synthase family. Monomer.

The protein localises to the cytoplasm. It carries out the reaction 3-phosphoshikimate + phosphoenolpyruvate = 5-O-(1-carboxyvinyl)-3-phosphoshikimate + phosphate. Its pathway is metabolic intermediate biosynthesis; chorismate biosynthesis; chorismate from D-erythrose 4-phosphate and phosphoenolpyruvate: step 6/7. Functionally, catalyzes the transfer of the enolpyruvyl moiety of phosphoenolpyruvate (PEP) to the 5-hydroxyl of shikimate-3-phosphate (S3P) to produce enolpyruvyl shikimate-3-phosphate and inorganic phosphate. The sequence is that of 3-phosphoshikimate 1-carboxyvinyltransferase from Herpetosiphon aurantiacus (strain ATCC 23779 / DSM 785 / 114-95).